The sequence spans 368 residues: Cobalt-precorrin-5B C(1)-methyltransferase (368 aa).

This sequence belongs to the CbiD family.

It carries out the reaction Co-precorrin-5B + S-adenosyl-L-methionine = Co-precorrin-6A + S-adenosyl-L-homocysteine. Its pathway is cofactor biosynthesis; adenosylcobalamin biosynthesis; cob(II)yrinate a,c-diamide from sirohydrochlorin (anaerobic route): step 6/10. Its function is as follows. Catalyzes the methylation of C-1 in cobalt-precorrin-5B to form cobalt-precorrin-6A. The polypeptide is Cobalt-precorrin-5B C(1)-methyltransferase (Brucella canis (strain ATCC 23365 / NCTC 10854 / RM-666)).